Consider the following 393-residue polypeptide: Arginine biosynthesis bifunctional protein ArgJ (393 aa).

Substrate-binding residues include T142, K168, T179, E265, N388, and T393. The active-site Nucleophile is the T179.

Belongs to the ArgJ family. Heterotetramer of two alpha and two beta chains.

The protein resides in the cytoplasm. It catalyses the reaction N(2)-acetyl-L-ornithine + L-glutamate = N-acetyl-L-glutamate + L-ornithine. It carries out the reaction L-glutamate + acetyl-CoA = N-acetyl-L-glutamate + CoA + H(+). It functions in the pathway amino-acid biosynthesis; L-arginine biosynthesis; L-ornithine and N-acetyl-L-glutamate from L-glutamate and N(2)-acetyl-L-ornithine (cyclic): step 1/1. It participates in amino-acid biosynthesis; L-arginine biosynthesis; N(2)-acetyl-L-ornithine from L-glutamate: step 1/4. In terms of biological role, catalyzes two activities which are involved in the cyclic version of arginine biosynthesis: the synthesis of N-acetylglutamate from glutamate and acetyl-CoA as the acetyl donor, and of ornithine by transacetylation between N(2)-acetylornithine and glutamate. This Geobacter sulfurreducens (strain ATCC 51573 / DSM 12127 / PCA) protein is Arginine biosynthesis bifunctional protein ArgJ.